The chain runs to 142 residues: Tol-Pal system protein TolR (142 aa).

Residues 1 to 17 (MARARGRGRRDLKSEIN) are Cytoplasmic-facing. A helical membrane pass occupies residues 18-38 (IVPLLDVLLVLLLIFMATAPI). Topologically, residues 39–142 (ITQSVEVDLP…KSVGLMTQPI (104 aa)) are periplasmic.

It belongs to the ExbD/TolR family. As to quaternary structure, the Tol-Pal system is composed of five core proteins: the inner membrane proteins TolA, TolQ and TolR, the periplasmic protein TolB and the outer membrane protein Pal. They form a network linking the inner and outer membranes and the peptidoglycan layer.

It is found in the cell inner membrane. Its function is as follows. Part of the Tol-Pal system, which plays a role in outer membrane invagination during cell division and is important for maintaining outer membrane integrity. Required, with TolQ, for the proton motive force-dependent activation of TolA and for TolA-Pal interaction. In Escherichia coli O157:H7, this protein is Tol-Pal system protein TolR.